A 270-amino-acid chain; its full sequence is NAD kinase (270 aa).

Aspartate 61 serves as the catalytic Proton acceptor. Residues 61-62 (DG), 133-134 (NE), arginine 144, arginine 163, aspartate 165, and 176-181 (TAYNLS) each bind NAD(+).

This sequence belongs to the NAD kinase family. Requires a divalent metal cation as cofactor.

Its subcellular location is the cytoplasm. It catalyses the reaction NAD(+) + ATP = ADP + NADP(+) + H(+). Functionally, involved in the regulation of the intracellular balance of NAD and NADP, and is a key enzyme in the biosynthesis of NADP. Catalyzes specifically the phosphorylation on 2'-hydroxyl of the adenosine moiety of NAD to yield NADP. The protein is NAD kinase of Natronomonas pharaonis (strain ATCC 35678 / DSM 2160 / CIP 103997 / JCM 8858 / NBRC 14720 / NCIMB 2260 / Gabara) (Halobacterium pharaonis).